Consider the following 249-residue polypeptide: Microvitellogenin (249 aa).

An N-terminal signal peptide occupies residues 1–17 (MLRTTVVLLTLAAIAFA).

Small vitellogenic protein found in females. It is synthesized in the fat body, secreted into the hemolymph, and taken up by developing oocytes. In Manduca sexta (Tobacco hawkmoth), this protein is Microvitellogenin (MVG).